A 255-amino-acid polypeptide reads, in one-letter code: 5-oxoprolinase subunit A (255 aa).

The protein belongs to the LamB/PxpA family. Forms a complex composed of PxpA, PxpB and PxpC.

It catalyses the reaction 5-oxo-L-proline + ATP + 2 H2O = L-glutamate + ADP + phosphate + H(+). Its function is as follows. Catalyzes the cleavage of 5-oxoproline to form L-glutamate coupled to the hydrolysis of ATP to ADP and inorganic phosphate. This is 5-oxoprolinase subunit A from Pyrococcus horikoshii (strain ATCC 700860 / DSM 12428 / JCM 9974 / NBRC 100139 / OT-3).